A 481-amino-acid chain; its full sequence is Pentatricopeptide repeat-containing protein 8, mitochondrial (481 aa).

The transit peptide at Met1–Gln55 directs the protein to the mitochondrion. 2 PPR repeats span residues Ser137–Pro172 and Ser365–Pro399.

Its subcellular location is the mitochondrion. In terms of biological role, mitochondrial RNA-binding protein involved in mitochondrial translation. The cox1 mRNA is one target but it is not clear if ppr8 has a single or multiple targets. The sequence is that of Pentatricopeptide repeat-containing protein 8, mitochondrial (ppr8) from Schizosaccharomyces pombe (strain 972 / ATCC 24843) (Fission yeast).